A 107-amino-acid polypeptide reads, in one-letter code: U1-lycotoxin-Ls1b (107 aa).

The N-terminal stretch at 1 to 20 (MMKVLVVVALLVTHISYSSS) is a signal peptide. Residues 21-41 (EGIDDLEADELLSLMANEQTR) constitute a propeptide that is removed on maturation. Intrachain disulfides connect Cys-44–Cys-59, Cys-51–Cys-68, Cys-58–Cys-86, and Cys-70–Cys-84.

Belongs to the neurotoxin 19 (CSTX) family. 04 (U1-Lctx) subfamily. In terms of tissue distribution, expressed by the venom gland.

It localises to the secreted. The chain is U1-lycotoxin-Ls1b from Lycosa singoriensis (Wolf spider).